A 676-amino-acid chain; its full sequence is Phosphatidylinositol-3,5-bisphosphate 3-phosphatase MTMR6 (676 aa).

Residues 125–501 (GWRRLDWNSE…ARFTVWTAMY (377 aa)) enclose the Myotubularin phosphatase domain. 3 residues coordinate a 1,2-diacyl-sn-glycero-3-phospho-(1D-myo-inositol-3,5-bisphosphate): N249, N274, and I275. A 1,2-diacyl-sn-glycero-3-phospho-(1D-myo-inositol-3-phosphate)-binding residues include N249, N274, and I275. Substrate-binding positions include 249 to 252 (NKVQ), 274 to 275 (NI), and 335 to 341 (CSDGWDR). C335 (phosphocysteine intermediate) is an active-site residue. A 1,2-diacyl-sn-glycero-3-phospho-(1D-myo-inositol-3,5-bisphosphate) is bound by residues S336, D337, G338, W339, D340, R341, K377, and R381. A 1,2-diacyl-sn-glycero-3-phospho-(1D-myo-inositol-3-phosphate) contacts are provided by S336, D337, G338, W339, D340, and R341. Position 381 (R381) interacts with a 1,2-diacyl-sn-glycero-3-phospho-(1D-myo-inositol-3-phosphate). R381 lines the substrate pocket. An FYVE-type zinc finger spans residues 618 to 675 (KWQPLRGADRCSNPACRGEFSSTIERRIHCHLCGMIFCRRCLKVSADERERVCDKCKT).

Belongs to the protein-tyrosine phosphatase family. Non-receptor class myotubularin subfamily. As to quaternary structure, heterodimer with mtm-9. As to expression, expressed in intestinal cells. Expressed in head neurons, pre-anal ganglion, hypodermal cells, anal depressor muscle and non-neuronal cells in the tail.

Its subcellular location is the cytoplasm. It is found in the membrane. It localises to the apical cell membrane. The catalysed reaction is a 1,2-diacyl-sn-glycero-3-phospho-(1D-myo-inositol-3,5-bisphosphate) + H2O = a 1,2-diacyl-sn-glycero-3-phospho-(1D-myo-inositol-5-phosphate) + phosphate. It catalyses the reaction a 1,2-diacyl-sn-glycero-3-phospho-(1D-myo-inositol-3-phosphate) + H2O = a 1,2-diacyl-sn-glycero-3-phospho-(1D-myo-inositol) + phosphate. The enzyme catalyses 1,2-dioctanoyl-sn-glycero-3-phospho-(1D-myo-inositol-3,5-bisphosphate) + H2O = 1,2-dioctanoyl-sn-glycero-3-phospho-(1D-myo-inositol-5-phosphate) + phosphate. It carries out the reaction 1,2-dioctanoyl-sn-glycero-3-phospho-(1-D-myo-inositol-3-phosphate) + H2O = 1,2-dioctanoyl-sn-glycero-3-phospho-(1D-myo-inositol) + phosphate. Probable lipid phosphatase that specifically dephosphorylates the D-3 position of phosphatidylinositol 3-phosphate and phosphatidylinositol 3,5-bisphosphate, generating phosphatidylinositol and phosphatidylinositol 5-phosphate. In association with mtm-9, plays a role in endosome trafficking probably by regulating phosphatidylinositol-3-phosphate levels. Regulates fluid phase endocytosis in coelomocytes. Controls the endosomal localization of sorting nexin snx-3 and the levels of sorting receptor mig-14. By regulating the retrograde transport of mig-14, may be involved in the secretion of Wnt ligands such as egl-20. Regulates posterior migration of QL neuroblast descendants and the anterior migration of QR neuroblast descendants and HSN neurons during larval development. Involved in the formation of correct synapse number in DA9 motor neurons probably in part by regulating the secretion of Wnt ligand egl-20. This Caenorhabditis elegans protein is Phosphatidylinositol-3,5-bisphosphate 3-phosphatase MTMR6.